A 342-amino-acid polypeptide reads, in one-letter code: Large ribosomal subunit protein uL10 (342 aa).

The interval 212–342 is required for interaction with ribosomal protein L12 dimers; sequence EYIDMLQKAY…ALAGLSALFG (131 aa). Positions 299–308 are enriched in polar residues; it reads QAQVAVATQP. Positions 299–342 are disordered; sequence QAQVAVATQPSEEEKKEEEKTEEEEKEEEASEEEALAGLSALFG. The span at 318 to 333 shows a compositional bias: acidic residues; that stretch reads KTEEEEKEEEASEEEA.

Belongs to the universal ribosomal protein uL10 family. Part of the 50S ribosomal subunit, binds large rRNA. Forms the ribosomal stalk which helps the ribosome interact with GTP-bound translation factors. Forms a heptameric L10(L12)2(L12)2(L12)2 complex, where L10 forms an elongated spine to which the L12 dimers bind in a sequential fashion.

Forms the large subunit's ribosomal stalk, playing a central role in the interaction of the ribosome with elongation factors; the stalk complex of P.horikoshii binds to E.coli large subunits and confers on them the ability to interact with eukaryotic elongation factors. Each succesive L12 dimer bound along the P0 spine increases the GTPase activity of elongation factors and increases translation by reconsituted ribosomes, although the first site is the most stimulatory. In Pyrococcus horikoshii (strain ATCC 700860 / DSM 12428 / JCM 9974 / NBRC 100139 / OT-3), this protein is Large ribosomal subunit protein uL10.